The chain runs to 62 residues: Beta-defensin 110 (62 aa).

A signal peptide spans 1–21; it reads MKIHLFFFILLFWVTILPARS. Cystine bridges form between Cys32/Cys60, Cys39/Cys53, and Cys43/Cys61.

The protein belongs to the beta-defensin family.

Its subcellular location is the secreted. Functionally, has antibacterial activity. In Canis lupus familiaris (Dog), this protein is Beta-defensin 110 (DEFB110).